The primary structure comprises 86 residues: MFTLKKPLLLIVLLGIISLSLCEQERNADEDEESEIKRGIFPKIIGKGIKTGIVNGIKSLVKGVGMKVFKAGLSNIGNTGCNEDEC.

Residues 1 to 22 form the signal peptide; the sequence is MFTLKKPLLLIVLLGIISLSLC. Residues 23–36 constitute a propeptide that is removed on maturation; that stretch reads EQERNADEDEESEI. A disulfide bridge connects residues cysteine 81 and cysteine 86.

Expressed by the skin glands.

The protein localises to the secreted. Antimicrobial peptide. The sequence is that of Palustrin-3b from Odorrana versabilis (Chinese bamboo leaf odorous frog).